The sequence spans 216 residues: Small ribosomal subunit protein uS3 (216 aa).

The region spanning leucine 20–histidine 91 is the KH type-2 domain.

This sequence belongs to the universal ribosomal protein uS3 family.

The sequence is that of Small ribosomal subunit protein uS3 (RPS3) from Encephalitozoon cuniculi (strain GB-M1) (Microsporidian parasite).